The chain runs to 264 residues: UPF0162 protein PM0557 (264 aa).

Belongs to the UPF0162 family.

In Pasteurella multocida (strain Pm70), this protein is UPF0162 protein PM0557.